The following is a 321-amino-acid chain: Anthranilate phosphoribosyltransferase (321 aa).

5-phospho-alpha-D-ribose 1-diphosphate-binding positions include glycine 72, 75–76 (GD), threonine 80, 82–85 (NVST), 99–107 (KHGNVSITS), and serine 111. Position 72 (glycine 72) interacts with anthranilate. Serine 84 serves as a coordination point for Mg(2+). Asparagine 102 provides a ligand contact to anthranilate. Residue arginine 157 participates in anthranilate binding. The Mg(2+) site is built by aspartate 216 and glutamate 217.

Belongs to the anthranilate phosphoribosyltransferase family. Homodimer. Requires Mg(2+) as cofactor.

The enzyme catalyses N-(5-phospho-beta-D-ribosyl)anthranilate + diphosphate = 5-phospho-alpha-D-ribose 1-diphosphate + anthranilate. It participates in amino-acid biosynthesis; L-tryptophan biosynthesis; L-tryptophan from chorismate: step 2/5. Its function is as follows. Catalyzes the transfer of the phosphoribosyl group of 5-phosphorylribose-1-pyrophosphate (PRPP) to anthranilate to yield N-(5'-phosphoribosyl)-anthranilate (PRA). This is Anthranilate phosphoribosyltransferase from Methanococcus maripaludis (strain C6 / ATCC BAA-1332).